Consider the following 107-residue polypeptide: DNA-directed RNA polymerase subunit omega (107 aa).

Positions 81-107 (MEEEAAKGNADAGQGEGDAPKTPGQDG) are disordered.

This sequence belongs to the RNA polymerase subunit omega family. In terms of assembly, the RNAP catalytic core consists of 2 alpha, 1 beta, 1 beta' and 1 omega subunit. When a sigma factor is associated with the core the holoenzyme is formed, which can initiate transcription.

It carries out the reaction RNA(n) + a ribonucleoside 5'-triphosphate = RNA(n+1) + diphosphate. In terms of biological role, promotes RNA polymerase assembly. Latches the N- and C-terminal regions of the beta' subunit thereby facilitating its interaction with the beta and alpha subunits. The polypeptide is DNA-directed RNA polymerase subunit omega (Alkalilimnicola ehrlichii (strain ATCC BAA-1101 / DSM 17681 / MLHE-1)).